The following is a 706-amino-acid chain: uncharacterized protein (706 aa).

Coiled-coil stretches lie at residues 86–162, 269–299, and 337–427; these read TKNV…AKKI, DYLK…VNEL, and DDYI…QSDY.

This is an uncharacterized protein from Staphylococcus aureus (strain MRSA252).